Reading from the N-terminus, the 330-residue chain is 1,8-cineole synthase (330 aa).

Asp81 contacts Mg(2+). Residues 81–85 carry the DDXXD motif motif; that stretch reads DDHFD. Substrate is bound at residue Arg174. Mg(2+) contacts are provided by Asn220 and Ser224. The NXXXSXXXE motif signature appears at 220 to 228; that stretch reads NDVLSLEKE. Lys227 contributes to the substrate binding site. Glu228 is a Mg(2+) binding site. 314-315 provides a ligand contact to substrate; it reads RY.

The protein belongs to the terpene synthase family. As to quaternary structure, homodimer. The cofactor is Mg(2+).

It carries out the reaction (2E)-geranyl diphosphate + H2O = 1,8-cineole + diphosphate. The catalysed reaction is neryl diphosphate + H2O = 1,8-cineole + diphosphate. Its function is as follows. In vitro, catalyzes the formation of 1,8-cineole from geranyl diphosphate (GPP). Can also accept neryl diphosphate (NPP) as substrate to produce 1,8-cineole. The protein is 1,8-cineole synthase of Streptomyces clavuligerus.